The primary structure comprises 159 residues: MKIMIIQGPNVNMLGVREVGIYGAMKMEEIHEQMKLAASQNNVELDFFQSNFEGEIVDKIQECLGTVDGIIINAAGYTHTSVAIRDAIAAVALPTIEVHISNVYRREEFRQKSLIAPVCSGTIVGFGPFGYHLALMGIIQICEQIKNLRAMQQAQQTNK.

The Proton acceptor role is filled by Tyr22. The substrate site is built by Asn73, His79, and Asp86. The Proton donor role is filled by His99. Substrate contacts are provided by residues 100–101 and Arg110; that span reads IS.

It belongs to the type-II 3-dehydroquinase family. In terms of assembly, homododecamer.

The enzyme catalyses 3-dehydroquinate = 3-dehydroshikimate + H2O. The protein operates within metabolic intermediate biosynthesis; chorismate biosynthesis; chorismate from D-erythrose 4-phosphate and phosphoenolpyruvate: step 3/7. Catalyzes a trans-dehydration via an enolate intermediate. The sequence is that of 3-dehydroquinate dehydratase from Campylobacter jejuni subsp. jejuni serotype O:6 (strain 81116 / NCTC 11828).